The sequence spans 312 residues: Tetraacyldisaccharide 4'-kinase (312 aa).

Ile-60–Thr-67 is an ATP binding site.

Belongs to the LpxK family.

It catalyses the reaction a lipid A disaccharide + ATP = a lipid IVA + ADP + H(+). Its pathway is glycolipid biosynthesis; lipid IV(A) biosynthesis; lipid IV(A) from (3R)-3-hydroxytetradecanoyl-[acyl-carrier-protein] and UDP-N-acetyl-alpha-D-glucosamine: step 6/6. Functionally, transfers the gamma-phosphate of ATP to the 4'-position of a tetraacyldisaccharide 1-phosphate intermediate (termed DS-1-P) to form tetraacyldisaccharide 1,4'-bis-phosphate (lipid IVA). The protein is Tetraacyldisaccharide 4'-kinase of Helicobacter pylori (strain J99 / ATCC 700824) (Campylobacter pylori J99).